The primary structure comprises 79 residues: Conotoxin 8 (79 aa).

The N-terminal stretch at Met1–Ala22 is a signal peptide. A propeptide spanning residues Asp23–Arg47 is cleaved from the precursor. Cystine bridges form between Cys49–Cys62, Cys56–Cys67, and Cys61–Cys77.

This sequence belongs to the conotoxin O1 superfamily. Expressed by the venom duct.

It localises to the secreted. The polypeptide is Conotoxin 8 (Conus vexillum (Flag cone)).